A 360-amino-acid chain; its full sequence is ELAV-like protein 2 (360 aa).

The segment at 1 to 36 (METQLSNGPTCNNTANGPTTVNNNCSSPVDSGNTED) is disordered. RRM domains lie at 39 to 117 (TNLI…YARP) and 125 to 205 (ANLY…FANN). Ser-221 is modified (phosphoserine). The region spanning 277 to 355 (WCIFVYNLAP…RVLQVSFKTN (79 aa)) is the RRM 3 domain.

Belongs to the RRM elav family. As to quaternary structure, interacts with IGF2BP1. Interacts with MAP1B light chain LC1. In terms of tissue distribution, brain; neural-specific. Expressed in the hippocampus.

RNA-binding protein that binds to the 3' untranslated region (3'UTR) of target mRNAs. Seems to recognize a GAAA motif. Can bind to its own 3'UTR, the FOS 3'UTR and the ID 3'UTR. In Mus musculus (Mouse), this protein is ELAV-like protein 2 (Elavl2).